We begin with the raw amino-acid sequence, 125 residues long: Putative iron-sulfur cluster insertion protein ErpA 2 (125 aa).

The iron-sulfur cluster site is built by C53, C117, and C119.

This sequence belongs to the HesB/IscA family. Homodimer. Requires iron-sulfur cluster as cofactor.

Its function is as follows. Required for insertion of 4Fe-4S clusters. This chain is Putative iron-sulfur cluster insertion protein ErpA 2, found in Polaromonas naphthalenivorans (strain CJ2).